Here is a 217-residue protein sequence, read N- to C-terminus: ATP phosphoribosyltransferase (217 aa).

The protein belongs to the ATP phosphoribosyltransferase family. Short subfamily. Heteromultimer composed of HisG and HisZ subunits.

The protein resides in the cytoplasm. It carries out the reaction 1-(5-phospho-beta-D-ribosyl)-ATP + diphosphate = 5-phospho-alpha-D-ribose 1-diphosphate + ATP. It functions in the pathway amino-acid biosynthesis; L-histidine biosynthesis; L-histidine from 5-phospho-alpha-D-ribose 1-diphosphate: step 1/9. Catalyzes the condensation of ATP and 5-phosphoribose 1-diphosphate to form N'-(5'-phosphoribosyl)-ATP (PR-ATP). Has a crucial role in the pathway because the rate of histidine biosynthesis seems to be controlled primarily by regulation of HisG enzymatic activity. This is ATP phosphoribosyltransferase from Burkholderia orbicola (strain MC0-3).